The sequence spans 253 residues: Sulfate transporter CysZ (253 aa).

4 helical membrane passes run 31 to 51, 75 to 95, 151 to 171, and 222 to 242; these read FVILPLLVNILLMGGAFWWLF, LLWPLAVISVLLVFGYFFSTI, IVLLILYLIPGIGQTVAPVLW, and IPLLNLFIMPVAVCGATAMWV.

This sequence belongs to the CysZ family.

Its subcellular location is the cell inner membrane. In terms of biological role, high affinity, high specificity proton-dependent sulfate transporter, which mediates sulfate uptake. Provides the sulfur source for the cysteine synthesis pathway. This is Sulfate transporter CysZ from Escherichia coli (strain 55989 / EAEC).